We begin with the raw amino-acid sequence, 605 residues long: Elongation factor 4 (605 aa).

Residues 9-192 (CRIRNFCIIA…SIVHRIPPPA (184 aa)) enclose the tr-type G domain. GTP contacts are provided by residues 21-26 (DHGKST) and 139-142 (NKID).

Belongs to the TRAFAC class translation factor GTPase superfamily. Classic translation factor GTPase family. LepA subfamily.

It localises to the cell inner membrane. It catalyses the reaction GTP + H2O = GDP + phosphate + H(+). In terms of biological role, required for accurate and efficient protein synthesis under certain stress conditions. May act as a fidelity factor of the translation reaction, by catalyzing a one-codon backward translocation of tRNAs on improperly translocated ribosomes. Back-translocation proceeds from a post-translocation (POST) complex to a pre-translocation (PRE) complex, thus giving elongation factor G a second chance to translocate the tRNAs correctly. Binds to ribosomes in a GTP-dependent manner. The protein is Elongation factor 4 of Chlorobium chlorochromatii (strain CaD3).